A 264-amino-acid polypeptide reads, in one-letter code: Inner membrane ABC transporter permease protein YdcV (264 aa).

The Cytoplasmic portion of the chain corresponds to 1–12; that stretch reads MHSERAPFFLKL. Residues 13–33 traverse the membrane as a helical segment; it reads AAWGGVVFLHFPILIIAAYAF. The Periplasmic portion of the chain corresponds to 34–70; that stretch reads NTEDAAFSFPPQGLTLRWFSVAAQRSDILDAVTLSLK. The ABC transmembrane type-1 domain maps to 65–252; it reads VTLSLKVAAL…MLVTTLPILG (188 aa). The chain crosses the membrane as a helical span at residues 71-91; it reads VAALATLIALVLGTLAAAALW. Topologically, residues 92–100 are cytoplasmic; it reads RRDFFGKNA. The chain crosses the membrane as a helical span at residues 101–121; the sequence is ISLLLLLPIALPGIVTGLALL. Residues 122-128 are Periplasmic-facing; it reads TAFKTIN. The helical transmembrane segment at 129 to 149 threads the bilayer; the sequence is LEPGFFTIVVGHATFCVVVVF. Residues 150–189 are Cytoplasmic-facing; it reads NNVIARFRRTSWSLVEASMDLGANGWQTFRYVVLPNLSSA. Residues 190 to 210 form a helical membrane-spanning segment; the sequence is LLAGGMLAFALSFDEIIVTTF. Residues 211–236 are Periplasmic-facing; it reads TAGHERTLPLWLLNQLGRPRDVPVTN. The helical transmembrane segment at 237–257 threads the bilayer; it reads VVALLVMLVTTLPILGAWWLT. The Cytoplasmic segment spans residues 258–264; it reads REGDNGQ.

This sequence belongs to the binding-protein-dependent transport system permease family. CysTW subfamily.

The protein resides in the cell inner membrane. Probably part of the ABC transporter complex YdcSTUV. Probably responsible for the translocation of the substrate across the membrane. In Shigella flexneri, this protein is Inner membrane ABC transporter permease protein YdcV (ydcV).